The sequence spans 341 residues: Twinfilin-2 (341 aa).

ADF-H domains are found at residues 1-131 (ATEE…KHLS) and 169-305 (GLAF…DEVH). At lysine 6 the chain carries N6-acetyllysine. At tyrosine 301 the chain carries Phosphotyrosine. Residues 314-341 (AFAKPKGPGGKRGHKRLIRGPGENGDDS) are disordered. Positions 322–331 (GGKRGHKRLI) are enriched in basic residues. Position 341 is a phosphoserine (serine 341).

This sequence belongs to the actin-binding proteins ADF family. Twinfilin subfamily. As to quaternary structure, interacts with G-actin; ADP-actin form and capping protein (CP). May also be able to interact with TWF1 and phosphoinositides, PI(4,5)P2. When bound to PI(4,5)P2, it is down-regulated. Interacts with MYO7A. Phosphorylated on both serine and threonine residues.

The protein resides in the cytoplasm. It localises to the cytoskeleton. Its subcellular location is the perinuclear region. It is found in the cell projection. The protein localises to the stereocilium. In terms of biological role, actin-binding protein involved in motile and morphological processes. Inhibits actin polymerization, likely by sequestering G-actin. By capping the barbed ends of filaments, it also regulates motility. Seems to play an important role in clathrin-mediated endocytosis and distribution of endocytic organelles. May play a role in regulating the mature length of the middle and short rows of stereocilia. In Pongo abelii (Sumatran orangutan), this protein is Twinfilin-2 (TWF2).